Here is a 453-residue protein sequence, read N- to C-terminus: Ribosomal protein uS12 methylthiotransferase RimO (453 aa).

The MTTase N-terminal domain occupies 5–120; sequence PKVGFVSLGC…VMQAVHSHLP (116 aa). Residues C14, C50, C79, C151, C155, and C158 each contribute to the [4Fe-4S] cluster site. Positions 137–382 constitute a Radical SAM core domain; the sequence is LTPRHYAYLK…MEVAEEVSAR (246 aa). The region spanning 385 to 453 is the TRAM domain; that stretch reads QRKVGKTLKV…ADGHDLWGEV (69 aa).

Belongs to the methylthiotransferase family. RimO subfamily. [4Fe-4S] cluster is required as a cofactor.

It localises to the cytoplasm. The enzyme catalyses L-aspartate(89)-[ribosomal protein uS12]-hydrogen + (sulfur carrier)-SH + AH2 + 2 S-adenosyl-L-methionine = 3-methylsulfanyl-L-aspartate(89)-[ribosomal protein uS12]-hydrogen + (sulfur carrier)-H + 5'-deoxyadenosine + L-methionine + A + S-adenosyl-L-homocysteine + 2 H(+). Its function is as follows. Catalyzes the methylthiolation of an aspartic acid residue of ribosomal protein uS12. In Burkholderia vietnamiensis (strain G4 / LMG 22486) (Burkholderia cepacia (strain R1808)), this protein is Ribosomal protein uS12 methylthiotransferase RimO.